Reading from the N-terminus, the 199-residue chain is Phycocyanobilin lyase CpcT (199 aa).

Belongs to the CpcT/CpeT biliprotein lyase family.

Catalyzes the site-selective attachment of phycocyanobilin (PCB) to 'Cys-154' of C-phycocyanin subunit beta (CpcB) and to 'Cys-153' of phycoerythrocyanin subunit beta (PecB). Does not have chromophore lyase activity for ApcA1, ApcA2, ApcB, ApcD, ApcF or PecA. The sequence is that of Phycocyanobilin lyase CpcT (cpcT1) from Nostoc sp. (strain PCC 7120 / SAG 25.82 / UTEX 2576).